A 292-amino-acid chain; its full sequence is MAEITAALVKELREKTDAPMMECKKALTEAEGDLARAEEILRVKLGNKASKAASRVTAEGLIGLFIAADGKQGAVIEVNCETDFVAKNPDFIDFVNKLAGLVAAQNPADVAALSELAFGEGTVETTRTALVGKIGENISIRRFQRIATPNALASYVHGGRIGVLVEFAGAEEVGKDLAMHIAATKPKALNADGVAAADIAAERSVAEQKAAESGKPADIAAKMVEGSVQKFLKEVTLLSQPFVKNDKQTVEQMLKEKGASISQFVLYVVGEGIEKKTTDFAAEVAAAAAGHA.

The interval 82 to 85 is involved in Mg(2+) ion dislocation from EF-Tu; sequence TDFV.

Belongs to the EF-Ts family.

It is found in the cytoplasm. In terms of biological role, associates with the EF-Tu.GDP complex and induces the exchange of GDP to GTP. It remains bound to the aminoacyl-tRNA.EF-Tu.GTP complex up to the GTP hydrolysis stage on the ribosome. This Bordetella avium (strain 197N) protein is Elongation factor Ts.